The sequence spans 404 residues: Pyrophosphate--fructose 6-phosphate 1-phosphotransferase (404 aa).

Glycine 12 is a binding site for diphosphate. Mg(2+) is bound at residue aspartate 121. Substrate contacts are provided by residues 149–151 (TID), 194–196 (MGR), glutamate 266, and 323–326 (YFSR). Aspartate 151 serves as the catalytic Proton acceptor.

This sequence belongs to the phosphofructokinase type A (PFKA) family. PPi-dependent PFK group II subfamily. Clade 'P' sub-subfamily. In terms of assembly, homodimer. Requires Mg(2+) as cofactor.

It localises to the cytoplasm. It catalyses the reaction beta-D-fructose 6-phosphate + diphosphate = beta-D-fructose 1,6-bisphosphate + phosphate + H(+). It functions in the pathway carbohydrate degradation; glycolysis; D-glyceraldehyde 3-phosphate and glycerone phosphate from D-glucose: step 3/4. Non-allosteric. Catalyzes the phosphorylation of D-fructose 6-phosphate, the first committing step of glycolysis. Uses inorganic phosphate (PPi) as phosphoryl donor instead of ATP like common ATP-dependent phosphofructokinases (ATP-PFKs), which renders the reaction reversible, and can thus function both in glycolysis and gluconeogenesis. Consistently, PPi-PFK can replace the enzymes of both the forward (ATP-PFK) and reverse (fructose-bisphosphatase (FBPase)) reactions. The polypeptide is Pyrophosphate--fructose 6-phosphate 1-phosphotransferase (Propionibacterium freudenreichii subsp. shermanii (strain ATCC 9614 / DSM 4902 / CIP 103027 / NCIMB 8099 / CIRM-BIA1)).